Reading from the N-terminus, the 677-residue chain is Pannexin-2 (677 aa).

Residues 11–53 (MATALLAGEKLRELILPGSQDDKAGALAALLLQLKLELPFDRV) lie on the Cytoplasmic side of the membrane. Residues 54 to 74 (VTIGTVLVPILLVTLVFTKNF) form a helical membrane-spanning segment. At 75–125 (AEEPIYCYTPHNFTRDQALYARGYCWTELRDALPGVDASLWPSLFEHKFLP) the chain is on the extracellular side. A glycan (N-linked (GlcNAc...) asparagine) is linked at Asn-86. A helical transmembrane segment spans residues 126-146 (YALLAFAAIMYVPALGWEFLA). Over 147–230 (STRLTSELNF…NFLAKLYLAR (84 aa)) the chain is Cytoplasmic. The helical transmembrane segment at 231–251 (HVLILLLSVVPISYLCTYYAT) threads the bilayer. Residues 252 to 295 (QKQNEFTCALGASPDGPVGSAGPTVRVSCKLPSVQLQRIIAGVD) are Extracellular-facing. The helical transmembrane segment at 296 to 316 (IVLLCFMNLIILVNLIHLFIF) threads the bilayer. The Cytoplasmic segment spans residues 317–617 (RKSNFIFDKL…LGKADPLTIL (301 aa)). The segment covering 394-408 (TTPTVRDSGIQTVDP) has biased composition (polar residues). Disordered stretches follow at residues 394-425 (TTPTVRDSGIQTVDPSINPAEPDGSAEPPVVK) and 485-512 (AHHYKGSGGDSGPSSAPPAASEKKHTRH). Phosphoserine is present on residues Ser-593 and Ser-604.

This sequence belongs to the pannexin family. As to quaternary structure, homoheptameric. In terms of processing, S-palmitoylated in neural stem and progenitor cells. Post-translationally, cleaved by CASP3 and CASP7 during apoptosis. Cleavage has no effect on it function. Expression is enriched in central nervous system. Expressed in suprabasal layers of skin epidermis. In terms of tissue distribution, more aboundantly expressed in skin.

Its subcellular location is the cell membrane. It is found in the golgi apparatus membrane. The protein localises to the endoplasmic reticulum membrane. It catalyses the reaction ATP(in) = ATP(out). The enzyme catalyses chloride(in) = chloride(out). The catalysed reaction is iodide(out) = iodide(in). It carries out the reaction Na(+)(in) = Na(+)(out). It catalyses the reaction D-gluconate(in) = D-gluconate(out). Ion channel with a slight anion preference. Also able to release ATP. Plays a role in regulating neurogenesis and apoptosis in keratinocytes. The polypeptide is Pannexin-2 (Panx2) (Mus musculus (Mouse)).